The primary structure comprises 508 residues: Sugar transport protein 12 (508 aa).

The Cytoplasmic segment spans residues 1–22; the sequence is MPSVGIVIGDGKKEYPGKLTLY. 12 helical membrane passes run 23 to 43, 80 to 100, 118 to 138, 141 to 161, 172 to 192, 201 to 221, 294 to 314, 317 to 337, 347 to 367, 383 to 403, 426 to 446, and 451 to 471; these read VTVT…DIGI, VSLT…SLVA, VLFC…MLIV, LLLG…LSEM, IGFQ…NFFF, LSLG…LILP, LTGI…IGFG, AALI…VVSI, FLFL…AAAI, WYAI…AWSW, ITVS…LMML, and FGLF…VYLF. The Cytoplasmic portion of the chain corresponds to 472–508; that stretch reads LPETRGVPIEEMNRVWRSHWYWSKFVDAEKNLTKVVI.

Belongs to the major facilitator superfamily. Sugar transporter (TC 2.A.1.1) family.

The protein resides in the membrane. In terms of biological role, mediates an active uptake of hexoses, probably by sugar/hydrogen symport. The sequence is that of Sugar transport protein 12 (STP12) from Arabidopsis thaliana (Mouse-ear cress).